The chain runs to 190 residues: Crossover junction endodeoxyribonuclease RuvC (190 aa).

Active-site residues include D7, E67, and D140. 3 residues coordinate Mg(2+): D7, E67, and D140.

Belongs to the RuvC family. Homodimer which binds Holliday junction (HJ) DNA. The HJ becomes 2-fold symmetrical on binding to RuvC with unstacked arms; it has a different conformation from HJ DNA in complex with RuvA. In the full resolvosome a probable DNA-RuvA(4)-RuvB(12)-RuvC(2) complex forms which resolves the HJ. It depends on Mg(2+) as a cofactor.

It localises to the cytoplasm. It carries out the reaction Endonucleolytic cleavage at a junction such as a reciprocal single-stranded crossover between two homologous DNA duplexes (Holliday junction).. Its function is as follows. The RuvA-RuvB-RuvC complex processes Holliday junction (HJ) DNA during genetic recombination and DNA repair. Endonuclease that resolves HJ intermediates. Cleaves cruciform DNA by making single-stranded nicks across the HJ at symmetrical positions within the homologous arms, yielding a 5'-phosphate and a 3'-hydroxyl group; requires a central core of homology in the junction. The consensus cleavage sequence is 5'-(A/T)TT(C/G)-3'. Cleavage occurs on the 3'-side of the TT dinucleotide at the point of strand exchange. HJ branch migration catalyzed by RuvA-RuvB allows RuvC to scan DNA until it finds its consensus sequence, where it cleaves and resolves the cruciform DNA. The sequence is that of Crossover junction endodeoxyribonuclease RuvC from Fusobacterium nucleatum subsp. nucleatum (strain ATCC 25586 / DSM 15643 / BCRC 10681 / CIP 101130 / JCM 8532 / KCTC 2640 / LMG 13131 / VPI 4355).